Here is a 354-residue protein sequence, read N- to C-terminus: Trans-3-hydroxy-L-proline dehydratase (354 aa).

C104 (proton acceptor) is an active-site residue. Substrate-binding positions include 105-106, D269, and 274-275; these read GH and GS.

Belongs to the proline racemase family. Homodimer. As to expression, ubiquitously expressed.

The enzyme catalyses trans-3-hydroxy-L-proline = 1-pyrroline-2-carboxylate + H2O. Its function is as follows. Catalyzes the dehydration of trans-3-hydroxy-L-proline to Delta(1)-pyrroline-2-carboxylate (Pyr2C). May be required to degrade trans-3-hydroxy-L-proline from the diet and originating from the degradation of proteins such as collagen-IV that contain it. This is Trans-3-hydroxy-L-proline dehydratase (L3HYPDH) from Homo sapiens (Human).